The primary structure comprises 436 residues: NADH-quinone oxidoreductase subunit D 1 (436 aa).

Belongs to the complex I 49 kDa subunit family. NDH-1 is composed of 14 different subunits. Subunits NuoB, C, D, E, F, and G constitute the peripheral sector of the complex.

It localises to the cell inner membrane. It carries out the reaction a quinone + NADH + 5 H(+)(in) = a quinol + NAD(+) + 4 H(+)(out). Its function is as follows. NDH-1 shuttles electrons from NADH, via FMN and iron-sulfur (Fe-S) centers, to quinones in the respiratory chain. The immediate electron acceptor for the enzyme in this species is believed to be ubiquinone. Couples the redox reaction to proton translocation (for every two electrons transferred, four hydrogen ions are translocated across the cytoplasmic membrane), and thus conserves the redox energy in a proton gradient. This Stenotrophomonas maltophilia (strain R551-3) protein is NADH-quinone oxidoreductase subunit D 1.